Consider the following 462-residue polypeptide: L-seryl-tRNA(Sec) selenium transferase (462 aa).

Position 293 is an N6-(pyridoxal phosphate)lysine (lysine 293).

This sequence belongs to the SelA family. Pyridoxal 5'-phosphate is required as a cofactor.

The protein resides in the cytoplasm. The catalysed reaction is L-seryl-tRNA(Sec) + selenophosphate + H(+) = L-selenocysteinyl-tRNA(Sec) + phosphate. It participates in aminoacyl-tRNA biosynthesis; selenocysteinyl-tRNA(Sec) biosynthesis; selenocysteinyl-tRNA(Sec) from L-seryl-tRNA(Sec) (bacterial route): step 1/1. Functionally, converts seryl-tRNA(Sec) to selenocysteinyl-tRNA(Sec) required for selenoprotein biosynthesis. This chain is L-seryl-tRNA(Sec) selenium transferase, found in Clostridium botulinum (strain ATCC 19397 / Type A).